A 92-amino-acid polypeptide reads, in one-letter code: Small ribosomal subunit protein uS19 (92 aa).

Belongs to the universal ribosomal protein uS19 family.

Functionally, protein S19 forms a complex with S13 that binds strongly to the 16S ribosomal RNA. The protein is Small ribosomal subunit protein uS19 of Rhodopseudomonas palustris (strain BisB18).